A 651-amino-acid polypeptide reads, in one-letter code: Methionine--tRNA ligase (651 aa).

Positions 10-20 (AYTNGPLHLGH) match the 'HIGH' region motif. Residues cysteine 142, cysteine 145, cysteine 154, and cysteine 157 each coordinate Zn(2+). Positions 320–324 (KMSTS) match the 'KMSKS' region motif. Threonine 323 contacts ATP. Residues 550–651 (YLEKIDLRVG…KDIKAGSKVR (102 aa)) form the tRNA-binding domain.

Belongs to the class-I aminoacyl-tRNA synthetase family. MetG type 1 subfamily. Homodimer. The cofactor is Zn(2+).

It localises to the cytoplasm. It carries out the reaction tRNA(Met) + L-methionine + ATP = L-methionyl-tRNA(Met) + AMP + diphosphate. Functionally, is required not only for elongation of protein synthesis but also for the initiation of all mRNA translation through initiator tRNA(fMet) aminoacylation. This Methanocaldococcus jannaschii (strain ATCC 43067 / DSM 2661 / JAL-1 / JCM 10045 / NBRC 100440) (Methanococcus jannaschii) protein is Methionine--tRNA ligase.